The chain runs to 225 residues: Suppressor of cytokine signaling 3 (225 aa).

Positions Leu-22 to Leu-33 are kinase inhibitory region (KIR). An extended SH2 subdomain (ESS) region spans residues Val-34–Gly-45. One can recognise an SH2 domain in the interval Phe-46–Glu-142. The disordered stretch occupies residues Thr-141–Thr-160. The SOCS box domain maps to Val-177 to Pro-224.

As to quaternary structure, interacts with multiple activated proteins of the tyrosine kinase signaling pathway including IGF1 receptor, insulin receptor and JAK2. Binding to JAK2 is mediated through the KIR and SH2 domains to a phosphorylated tyrosine residue within the JAK2 JH1 domain. Binds specific activated tyrosine residues of the leptin, EPO, IL12, GSCF and gp130 receptors. Interaction with CSNK1E stabilize SOCS3 protein. Component of the probable ECS(SOCS3) E3 ubiquitin-protein ligase complex which contains CUL5, RNF7/RBX2, Elongin BC complex and SOCS3. Interacts with CUL5, RNF7, ELOB and ELOC. Interacts with FGFR3. Interacts with INSR. Interacts with BCL10; this interaction may interfere with BCL10-binding with PELI2. Interacts with NOD2 (via CARD domain); the interaction promotes NOD2 degradation. In terms of processing, phosphorylated on tyrosine residues after stimulation by the cytokines, IL-2, EPO or IGF1.

Its pathway is protein modification; protein ubiquitination. Its function is as follows. SOCS family proteins form part of a classical negative feedback system that regulates cytokine signal transduction. SOCS3 is involved in negative regulation of cytokines that signal through the JAK/STAT pathway. Inhibits cytokine signal transduction by binding to tyrosine kinase receptors including IL6ST/gp130, LIF, erythropoietin, insulin, IL12, GCSF and leptin receptors. Binding to JAK2 inhibits its kinase activity and regulates IL6 signaling. Suppresses fetal liver erythropoiesis. Regulates onset and maintenance of allergic responses mediated by T-helper type 2 cells. Probable substrate recognition component of a SCF-like ECS (Elongin BC-CUL2/5-SOCS-box protein) E3 ubiquitin-protein ligase complex which mediates the ubiquitination and subsequent proteasomal degradation of target proteins. The polypeptide is Suppressor of cytokine signaling 3 (Rattus norvegicus (Rat)).